We begin with the raw amino-acid sequence, 205 residues long: Tumor suppressor candidate gene 1 protein homolog (205 aa).

Residues 1–12 (MWRMRGGATRRG) are compositionally biased toward low complexity. The tract at residues 1 to 49 (MWRMRGGATRRGSCGGEGGGSRGESGRLGRAREGGGGGGGVGWRGRAGG) is disordered. Residues 13–23 (SCGGEGGGSRG) show a composition bias toward gly residues. Basic and acidic residues predominate over residues 24–33 (ESGRLGRARE). Over residues 34–48 (GGGGGGGVGWRGRAG) the composition is skewed to gly residues. The stretch at 66-110 (LEALRARDERDRQNARLREENARLRLENRRLRRENRSLFRQALRL) forms a coiled coil. Disordered stretches follow at residues 113–149 (DSGE…SPRA) and 174–205 (GARP…RPWL). Ser146 is modified (phosphoserine). A compositionally biased stretch (basic and acidic residues) spans 196–205 (HDPDVPRPWL).

This Mus musculus (Mouse) protein is Tumor suppressor candidate gene 1 protein homolog (Tusc1).